The chain runs to 444 residues: Inward rectifier potassium channel 4 (444 aa).

The Cytoplasmic segment spans residues 1 to 55; it reads MHGHNRNGQAHVPRRKRRNRFVKKNGQCNVYFANLSNKSQRYMADIFTTCVDTRW. Residues 56-80 form a helical membrane-spanning segment; sequence RYMLMLFSAAFLVSWLFFGLLFWCI. Residues 81–119 are Extracellular-facing; sequence AFFHGDLEASPSVPAAGAPGGNGGAAPAAPKPCIMHVNG. Positions 120-131 form an intramembrane region, helical; Pore-forming; that stretch reads FLGAFLFSVETQ. An intramembrane region (pore-forming) is located at residues 132 to 138; sequence TTIGYGF. Residues 133-138 carry the Selectivity filter motif; that stretch reads TIGYGF. The Extracellular segment spans residues 139 to 147; the sequence is RCVTEECPL. A helical transmembrane segment spans residues 148–169; it reads AVIAVVVQSIVGCVIDSFMIGT. At 170 to 444 the chain is on the cytoplasmic side; the sequence is IMAKMARPKK…NISYRRESAI (275 aa). A PDZ-binding motif is present at residues 442–444; it reads SAI.

It belongs to the inward rectifier-type potassium channel (TC 1.A.2.1) family. KCNJ4 subfamily. In terms of assembly, homomultimeric and heteromultimeric association with KCNJ2 and KCNJ12. Interacts with DLG2 and DLG4. Associates, via its PDZ-recognition domain, with a complex containing LIN7A, LIN7B, LIN7C, DLG1, CASK and APBA1. Interacts with TAX1BP3. TAX1BP3 competes with LIN7 family members for KCNJ4 binding.

It localises to the cell membrane. The protein resides in the postsynaptic cell membrane. Its subcellular location is the cytoplasmic vesicle membrane. The enzyme catalyses K(+)(in) = K(+)(out). Functionally, inward rectifier potassium channels are characterized by a greater tendency to allow potassium to flow into the cell rather than out of it. Their voltage dependence is regulated by the concentration of extracellular potassium; as external potassium is raised, the voltage range of the channel opening shifts to more positive voltages. The inward rectification is mainly due to the blockage of outward current by internal magnesium. Can be blocked by extracellular barium and cesium. The chain is Inward rectifier potassium channel 4 (KCNJ4) from Mesocricetus auratus (Golden hamster).